The chain runs to 399 residues: Argininosuccinate synthase (399 aa).

ATP-binding positions include 10 to 18 and alanine 38; that span reads AYSGGVDTS. Tyrosine 89 contributes to the L-citrulline binding site. Residue glycine 119 coordinates ATP. Positions 121, 125, and 126 each coordinate L-aspartate. Position 125 (asparagine 125) interacts with L-citrulline. L-citrulline-binding residues include arginine 129, serine 177, serine 186, glutamate 262, and tyrosine 274.

This sequence belongs to the argininosuccinate synthase family. Type 1 subfamily. Homotetramer.

It is found in the cytoplasm. The catalysed reaction is L-citrulline + L-aspartate + ATP = 2-(N(omega)-L-arginino)succinate + AMP + diphosphate + H(+). It participates in amino-acid biosynthesis; L-arginine biosynthesis; L-arginine from L-ornithine and carbamoyl phosphate: step 2/3. The chain is Argininosuccinate synthase from Acaryochloris marina (strain MBIC 11017).